We begin with the raw amino-acid sequence, 399 residues long: Elongation factor Tu (399 aa).

Residues 10–209 (KPHVNIGTIG…AVDEYIPEPT (200 aa)) form the tr-type G domain. Positions 19–26 (GHVDHGKT) are G1. 19-26 (GHVDHGKT) is a binding site for GTP. T26 is a binding site for Mg(2+). A G2 region spans residues 60 to 64 (GITIA). A G3 region spans residues 81 to 84 (DCPG). GTP-binding positions include 81 to 85 (DCPGH) and 136 to 139 (NKED). A G4 region spans residues 136–139 (NKED). Residues 174 to 176 (SAK) form a G5 region.

This sequence belongs to the TRAFAC class translation factor GTPase superfamily. Classic translation factor GTPase family. EF-Tu/EF-1A subfamily. In terms of assembly, monomer.

It is found in the cytoplasm. The enzyme catalyses GTP + H2O = GDP + phosphate + H(+). In terms of biological role, GTP hydrolase that promotes the GTP-dependent binding of aminoacyl-tRNA to the A-site of ribosomes during protein biosynthesis. In Sulfurimonas denitrificans (strain ATCC 33889 / DSM 1251) (Thiomicrospira denitrificans (strain ATCC 33889 / DSM 1251)), this protein is Elongation factor Tu.